Consider the following 245-residue polypeptide: Chymotrypsinogen A (245 aa).

Intrachain disulfides connect Cys-1–Cys-122, Cys-42–Cys-58, Cys-136–Cys-201, Cys-168–Cys-182, and Cys-191–Cys-220. A propeptide spanning residues 14–15 (SR) is cleaved from the precursor. A Peptidase S1 domain is found at 16–243 (IVNGEEAVPG…LVNWVQQTLA (228 aa)). Catalysis depends on charge relay system residues His-57 and Asp-102. Residues 147–148 (TN) constitute a propeptide that is removed on maturation. Ser-195 (charge relay system) is an active-site residue.

Belongs to the peptidase S1 family.

The protein localises to the secreted. Its subcellular location is the extracellular space. It carries out the reaction Preferential cleavage: Tyr-|-Xaa, Trp-|-Xaa, Phe-|-Xaa, Leu-|-Xaa.. In Bos taurus (Bovine), this protein is Chymotrypsinogen A.